We begin with the raw amino-acid sequence, 178 residues long: Large ribosomal subunit protein uL5 (178 aa).

Belongs to the universal ribosomal protein uL5 family. Part of the 50S ribosomal subunit; part of the 5S rRNA/L5/L18/L25 subcomplex. Contacts the 5S rRNA and the P site tRNA. Forms a bridge to the 30S subunit in the 70S ribosome.

This is one of the proteins that bind and probably mediate the attachment of the 5S RNA into the large ribosomal subunit, where it forms part of the central protuberance. In the 70S ribosome it contacts protein S13 of the 30S subunit (bridge B1b), connecting the 2 subunits; this bridge is implicated in subunit movement. Contacts the P site tRNA; the 5S rRNA and some of its associated proteins might help stabilize positioning of ribosome-bound tRNAs. The polypeptide is Large ribosomal subunit protein uL5 (Psychrobacter sp. (strain PRwf-1)).